An 88-amino-acid polypeptide reads, in one-letter code: HssA/B-like protein 12 (88 aa).

The protein belongs to the hssA/B family.

The polypeptide is HssA/B-like protein 12 (hssl12) (Dictyostelium discoideum (Social amoeba)).